Here is a 150-residue protein sequence, read N- to C-terminus: Large ribosomal subunit protein bL9 (150 aa).

The protein belongs to the bacterial ribosomal protein bL9 family.

Binds to the 23S rRNA. The polypeptide is Large ribosomal subunit protein bL9 (Paraburkholderia phymatum (strain DSM 17167 / CIP 108236 / LMG 21445 / STM815) (Burkholderia phymatum)).